Consider the following 114-residue polypeptide: RNA polymerase-binding protein RbpA (114 aa).

Belongs to the RNA polymerase-binding protein RbpA family. In terms of assembly, monomer. Forms a complex with the RNAP catalytic core, specifically with the beta subunit (RpoB); its binding site may overlap with that of Rif. May bind free principal sigma factors.

In terms of biological role, binds to RNA polymerase (RNAP), probably stimulating transcriptions from principal, but not alternative sigma factor promoters. Partially restores transcription in the presence of rifampicin (Rif) in vitro; overexpression leads to an increase in the Rif tolerance in vivo, with smaller colonies. Seems to act by removing Rif from its binding site and preventing its further binding. No longer stimulates transcription in Rif-resistant RNA polymerase (with mutations in rpoB). This chain is RNA polymerase-binding protein RbpA, found in Mycolicibacterium smegmatis (strain ATCC 700084 / mc(2)155) (Mycobacterium smegmatis).